The following is a 968-amino-acid chain: Protein translocase subunit SecA (968 aa).

ATP is bound by residues Gln-99, Gly-117–Thr-121, and Asp-631.

It belongs to the SecA family. Monomer and homodimer. Part of the essential Sec protein translocation apparatus which comprises SecA, SecYEG and auxiliary proteins SecDF. Other proteins may also be involved.

The protein resides in the cell inner membrane. It is found in the cytoplasm. It catalyses the reaction ATP + H2O + cellular proteinSide 1 = ADP + phosphate + cellular proteinSide 2.. Part of the Sec protein translocase complex. Interacts with the SecYEG preprotein conducting channel. Has a central role in coupling the hydrolysis of ATP to the transfer of proteins into and across the cell membrane, serving as an ATP-driven molecular motor driving the stepwise translocation of polypeptide chains across the membrane. In Chlamydia muridarum (strain MoPn / Nigg), this protein is Protein translocase subunit SecA.